Reading from the N-terminus, the 530-residue chain is Cytochrome P450 2U1 (530 aa).

4 helical membrane-spanning segments follow: residues 21 to 41 (VRATGGALLLCLLAVLLGWVW), 99 to 119 (VYGNIFSFFIGHRLVVVLSDF), 247 to 267 (ICLHSQLFLINICPWFYYLPF), and 328 to 348 (LFYIIGDLFIAGTDTTTNSLL). Cys476 is a binding site for heme. A helical membrane pass occupies residues 481–501 (LAKMELFLMFVSLMQTFTFAL).

It belongs to the cytochrome P450 family. Heme serves as cofactor. As to expression, widely expressed. Expressed in heart, brain and liver.

The protein resides in the endoplasmic reticulum membrane. It localises to the microsome membrane. It is found in the mitochondrion inner membrane. The enzyme catalyses an omega-methyl-long-chain fatty acid + reduced [NADPH--hemoprotein reductase] + O2 = an omega-hydroxy-long-chain fatty acid + oxidized [NADPH--hemoprotein reductase] + H2O + H(+). It catalyses the reaction (5Z,8Z,11Z,14Z)-eicosatetraenoate + reduced [NADPH--hemoprotein reductase] + O2 = 19-hydroxy-(5Z,8Z,11Z,14Z)-eicosatetraenoate + oxidized [NADPH--hemoprotein reductase] + H2O + H(+). It carries out the reaction (5Z,8Z,11Z,14Z)-eicosatetraenoate + reduced [NADPH--hemoprotein reductase] + O2 = 20-hydroxy-(5Z,8Z,11Z,14Z)-eicosatetraenoate + oxidized [NADPH--hemoprotein reductase] + H2O + H(+). The catalysed reaction is N-[(5Z,8Z,11Z,14Z)-eicosatetraenoyl]-serotonin + reduced [NADPH--hemoprotein reductase] + O2 = 2-oxo-N-[(5Z,8Z,11Z,14Z)-eicosatetraenoyl]-serotonin + oxidized [NADPH--hemoprotein reductase] + H2O + H(+). A cytochrome P450 monooxygenase involved in the metabolism of arachidonic acid and its conjugates. Mechanistically, uses molecular oxygen inserting one oxygen atom into a substrate, and reducing the second into a water molecule, with two electrons provided by NADPH via cytochrome P450 reductase (CPR; NADPH-ferrihemoprotein reductase). Acts as an omega and omega-1 hydroxylase for arachidonic acid and possibly for other long chain fatty acids. May modulate the arachidonic acid signaling pathway and play a role in other fatty acid signaling processes. May down-regulate the biological activities of N-arachidonoyl-serotonin, an endocannabinoid that has anti-nociceptive effects through inhibition of fatty acid amide hydrolase FAAH, TRPV1 receptor and T-type calcium channels. Catalyzes C-2 oxidation of the indole ring of N-arachidonoyl-serotonin forming a less active product 2-oxo-N-arachidonoyl-serotonin. The polypeptide is Cytochrome P450 2U1 (Mus musculus (Mouse)).